A 146-amino-acid chain; its full sequence is Catabolic 3-dehydroquinase (146 aa).

The Proton acceptor role is filled by Tyr24. Asn78, His84, and Asp91 together coordinate substrate. His104 acts as the Proton donor in catalysis. Substrate is bound by residues 105 to 106 (IT) and Arg115.

This sequence belongs to the type-II 3-dehydroquinase family. Homododecamer. Adopts a ring-like structure, composed of an arrangement of two hexameric rings stacked on top of one another.

It carries out the reaction 3-dehydroquinate = 3-dehydroshikimate + H2O. The protein operates within aromatic compound metabolism; 3,4-dihydroxybenzoate biosynthesis; 3,4-dihydroxybenzoate from 3-dehydroquinate: step 1/2. In terms of biological role, is involved in the catabolism of quinate. Allows the utilization of quinate as carbon source via the beta-ketoadipate pathway. The polypeptide is Catabolic 3-dehydroquinase (Candida albicans (strain SC5314 / ATCC MYA-2876) (Yeast)).